Consider the following 353-residue polypeptide: Farnesyl pyrophosphate synthase (353 aa).

Positions 57, 60, and 96 each coordinate isopentenyl diphosphate. The residue at position 57 (Lys-57) is an N6-(2-hydroxyisobutyryl)lysine; alternate. Lys-57 carries the N6-acetyllysine; alternate modification. Asp-103 and Asp-107 together coordinate Mg(2+). Arg-112 is a binding site for dimethylallyl diphosphate. Isopentenyl diphosphate is bound at residue Arg-113. 5 residues coordinate dimethylallyl diphosphate: Lys-200, Thr-201, Gln-240, Lys-257, and Lys-266.

It belongs to the FPP/GGPP synthase family. As to quaternary structure, homodimer. Interacts with RSAD2. Interacts with bovine leukemia virus (BLV) protein G4. It depends on Mg(2+) as a cofactor.

It localises to the cytoplasm. It catalyses the reaction isopentenyl diphosphate + dimethylallyl diphosphate = (2E)-geranyl diphosphate + diphosphate. The catalysed reaction is isopentenyl diphosphate + (2E)-geranyl diphosphate = (2E,6E)-farnesyl diphosphate + diphosphate. It participates in isoprenoid biosynthesis; farnesyl diphosphate biosynthesis; farnesyl diphosphate from geranyl diphosphate and isopentenyl diphosphate: step 1/1. Its pathway is isoprenoid biosynthesis; geranyl diphosphate biosynthesis; geranyl diphosphate from dimethylallyl diphosphate and isopentenyl diphosphate: step 1/1. With respect to regulation, inactivated by interferon-induced RSAD2. This inactivation may result of disruption of lipid rafts at the plasma membrane, and thus have an antiviral effect since many enveloped viruses need lipid rafts to bud efficiently out of the cell. In terms of biological role, key enzyme in isoprenoid biosynthesis which catalyzes the formation of farnesyl diphosphate (FPP), a precursor for several classes of essential metabolites including sterols, dolichols, carotenoids, and ubiquinones. FPP also serves as substrate for protein farnesylation and geranylgeranylation. Catalyzes the sequential condensation of isopentenyl pyrophosphate with the allylic pyrophosphates, dimethylallyl pyrophosphate, and then with the resultant geranylpyrophosphate to the ultimate product farnesyl pyrophosphate. This chain is Farnesyl pyrophosphate synthase (FDPS), found in Bos taurus (Bovine).